A 901-amino-acid polypeptide reads, in one-letter code: Protein translocase subunit SecA (901 aa).

ATP is bound by residues Gln-85, Gly-103–Thr-107, and Asp-510. A disordered region spans residues Arg-848 to Gln-901. Polar residues predominate over residues Ile-849–Ser-866. 4 residues coordinate Zn(2+): Cys-882, Cys-884, Cys-893, and His-894. Over residues Lys-888–Gln-901 the composition is skewed to basic residues.

Belongs to the SecA family. In terms of assembly, monomer and homodimer. Part of the essential Sec protein translocation apparatus which comprises SecA, SecYEG and auxiliary proteins SecDF-YajC and YidC. It depends on Zn(2+) as a cofactor.

It is found in the cell inner membrane. The protein resides in the cytoplasm. The enzyme catalyses ATP + H2O + cellular proteinSide 1 = ADP + phosphate + cellular proteinSide 2.. Its function is as follows. Part of the Sec protein translocase complex. Interacts with the SecYEG preprotein conducting channel. Has a central role in coupling the hydrolysis of ATP to the transfer of proteins into and across the cell membrane, serving both as a receptor for the preprotein-SecB complex and as an ATP-driven molecular motor driving the stepwise translocation of polypeptide chains across the membrane. This Haemophilus influenzae (strain 86-028NP) protein is Protein translocase subunit SecA.